The following is a 171-amino-acid chain: S-ribosylhomocysteine lyase (171 aa).

Fe cation is bound by residues His54, His58, and Cys128.

It belongs to the LuxS family. Homodimer. The cofactor is Fe cation.

The enzyme catalyses S-(5-deoxy-D-ribos-5-yl)-L-homocysteine = (S)-4,5-dihydroxypentane-2,3-dione + L-homocysteine. Functionally, involved in the synthesis of autoinducer 2 (AI-2) which is secreted by bacteria and is used to communicate both the cell density and the metabolic potential of the environment. The regulation of gene expression in response to changes in cell density is called quorum sensing. Catalyzes the transformation of S-ribosylhomocysteine (RHC) to homocysteine (HC) and 4,5-dihydroxy-2,3-pentadione (DPD). This chain is S-ribosylhomocysteine lyase, found in Salmonella agona (strain SL483).